The following is a 475-amino-acid chain: Aspartyl/glutamyl-tRNA(Asn/Gln) amidotransferase subunit B (475 aa).

The protein belongs to the GatB/GatE family. GatB subfamily. Heterotrimer of A, B and C subunits.

The enzyme catalyses L-glutamyl-tRNA(Gln) + L-glutamine + ATP + H2O = L-glutaminyl-tRNA(Gln) + L-glutamate + ADP + phosphate + H(+). The catalysed reaction is L-aspartyl-tRNA(Asn) + L-glutamine + ATP + H2O = L-asparaginyl-tRNA(Asn) + L-glutamate + ADP + phosphate + 2 H(+). In terms of biological role, allows the formation of correctly charged Asn-tRNA(Asn) or Gln-tRNA(Gln) through the transamidation of misacylated Asp-tRNA(Asn) or Glu-tRNA(Gln) in organisms which lack either or both of asparaginyl-tRNA or glutaminyl-tRNA synthetases. The reaction takes place in the presence of glutamine and ATP through an activated phospho-Asp-tRNA(Asn) or phospho-Glu-tRNA(Gln). The chain is Aspartyl/glutamyl-tRNA(Asn/Gln) amidotransferase subunit B from Chromobacterium violaceum (strain ATCC 12472 / DSM 30191 / JCM 1249 / CCUG 213 / NBRC 12614 / NCIMB 9131 / NCTC 9757 / MK).